The sequence spans 198 residues: Probable GTP-binding protein EngB (198 aa).

Positions 22 to 197 constitute an EngB-type G domain; it reads TLPEYAFIGR…LDYIEGINNS (176 aa). Residues 30 to 37, 57 to 61, 75 to 78, 142 to 145, and 175 to 178 contribute to the GTP site; these read GRSNVGKS, GKTQL, DLPG, TKAD, and ITSA. Ser-37 and Thr-59 together coordinate Mg(2+).

It belongs to the TRAFAC class TrmE-Era-EngA-EngB-Septin-like GTPase superfamily. EngB GTPase family. Mg(2+) serves as cofactor.

Its function is as follows. Necessary for normal cell division and for the maintenance of normal septation. In Christiangramia forsetii (strain DSM 17595 / CGMCC 1.15422 / KT0803) (Gramella forsetii), this protein is Probable GTP-binding protein EngB.